Here is a 527-residue protein sequence, read N- to C-terminus: MDGFHWTDIVSSMPPSIPPVEIIEQPKQRGMRFRYKCEGRSAGSIPGERSTDTSKTHPTIKINNYQGPARIRISLVTKDSPHKPHPHELVGKDCKDGYYEAELSPDRSIHSFQNLGIQCVKKREVEDAVAHRIRTNNNPFNVSPEELKADYDLNTVCLCFQVFIPDQAAGRMLPLPFVVSQPIYDNRAPNTAELKICRVNKNSGSCLGGDEIFLLCDKVQKEDIEVIFGLGNWEARGIFSQADVHRQVAIVFRTPAFQDTKIRQSVKVQMQLRRPSDKEVSEPMEFQYLPDEGDPHHIDEKRKRTLDNFKHYVKNNPFAGGETRPQRRIAVANRNVPTKSEPIRPSIPVPNPVVSCLPFSMPVLKAENVTSPSTLLSTVNISDFSNLGFSSQPPSQSDHDRLESMLNYPSFPGDANLDLVEMLPHENESRCTSLSSIDNSDFSQLLSESQSSGTLSAALQEPGTSQGTFMAYPESIARLMTNRPNEDEGGERIDSGLINGMFDISREEIHLTSLFELDFSSLLSNMK.

The RHD domain occupies 18–306 (PPVEIIEQPK…HIDEKRKRTL (289 aa)). Ser276 carries the post-translational modification Phosphoserine; by PKA. The Nuclear localization signal motif lies at 301-304 (KRKR). Transcriptional activation domain regions lie at residues 381-444 (ISDF…DFSQ) and 494-527 (DSGLINGMFDISREEIHLTSLFELDFSSLLSNMK). A 9aaTAD motif is present at residues 513 to 521 (SLFELDFSS).

Predominantly in the animal hemisphere of the oocyte; all tissues of early embryo.

It is found in the nucleus. The protein resides in the cytoplasm. Functionally, NF-kappa-B is a pleiotropic transcription factor present in almost all cell types and is the endpoint of a series of signal transduction events that are initiated by a vast array of stimuli related to many biological processes such as inflammation, immunity, differentiation, cell growth, tumorigenesis and apoptosis. NF-kappa-B is a homo- or heterodimeric complex formed by the Rel-like domain-containing proteins. The dimers bind at kappa-B sites in the DNA of their target genes and the individual dimers have distinct preferences for different kappa-B sites that they can bind with distinguishable affinity and specificity. Different dimer combinations act as transcriptional activators or repressors, respectively. NF-kappa-B is controlled by various mechanisms of post-translational modification and subcellular compartmentalization as well as by interactions with other cofactors or corepressors. NF-kappa-B complexes are held in the cytoplasm in an inactive state complexed with members of the NF-kappa-B inhibitor (I-kappa-B) family. In a conventional activation pathway, I-kappa-B is phosphorylated by I-kappa-B kinases (IKKs) in response to different activators, subsequently degraded thus liberating the active NF-kappa-B complex which translocates to the nucleus. RELA shows a weak DNA-binding site which could contribute directly to DNA binding in the NF-kappa-B complex. In Xenopus laevis (African clawed frog), this protein is Putative transcription factor p65 homolog (rela).